Here is an 85-residue protein sequence, read N- to C-terminus: High affinity immunoglobulin epsilon receptor subunit gamma (85 aa).

The first 18 residues, 1–18 (MIPAVVLLLLLLVEQAAA), serve as a signal peptide directing secretion. Residues 19–23 (LGEPQ) are Extracellular-facing. A helical transmembrane segment spans residues 24-44 (LCYILDAILFLYGIVLTLLYC). Residues 45 to 85 (RLKLQVRKAATASEKSDGIYTGLSTRTQETYETLKHEKPPQ) lie on the Cytoplasmic side of the membrane. The ITAM domain maps to 53-81 (AATASEKSDGIYTGLSTRTQETYETLKHE). Tyr-64 is modified (phosphotyrosine). Ser-68 bears the Phosphoserine mark. Tyr-75 bears the Phosphotyrosine mark. Thr-77 is subject to Phosphothreonine.

The protein belongs to the CD3Z/FCER1G family. In terms of assembly, igE Fc receptor is a tetramer of an alpha chain, a beta chain, and two disulfide linked gamma chains. Associates with FCGR1A; forms a functional signaling complex. The signaling subunit of immunoglobulin gamma (IgG) Fc receptor complex. As a homodimer or a heterodimer of CD247 and FCER1G, associates with the ligand binding subunit FCGR3A to form a functional receptor complex. Associates with CLEC6A. Interacts with CLEC4E. Interacts (via ITAM domain) with SYK (via SH2 domains); activates SYK, enabling integrin-mediated activation of neutrophils and macrophages. Interacts with CSF2RB and recruits SYK in response to IL3 stimulation; this interaction is direct. Interacts with CD300LH; the interaction may be indirect. Interacts with CD300LD. Interacts with TARM1.

The protein localises to the cell membrane. Adapter protein containing an immunoreceptor tyrosine-based activation motif (ITAM) that transduces activation signals from various immunoreceptors. As a component of the high-affinity immunoglobulin E (IgE) receptor, mediates allergic inflammatory signaling in mast cells. As a constitutive component of interleukin-3 receptor complex, selectively mediates interleukin 4/IL4 production by basophils priming T-cells toward effector T-helper 2 subset. Associates with pattern recognition receptors CLEC4D and CLEC4E to form a functional signaling complex in myeloid cells. Binding of mycobacterial trehalose 6,6'-dimycolate (TDM) to this receptor complex leads to phosphorylation of ITAM, triggering activation of SYK, CARD9 and NF-kappa-B, consequently driving maturation of antigen-presenting cells and shaping antigen-specific priming of T-cells toward effector T-helper 1 and T-helper 17 cell subtypes. May function cooperatively with other activating receptors. Functionally linked to integrin beta-2/ITGB2-mediated neutrophil activation. Also involved in integrin alpha-2/ITGA2-mediated platelet activation. The polypeptide is High affinity immunoglobulin epsilon receptor subunit gamma (FCER1G) (Bos taurus (Bovine)).